Consider the following 655-residue polypeptide: Ankyrin repeat and SAM domain-containing protein 3 (655 aa).

The interval 1–421 (MSELSDEASE…PGSEPQTEKS (421 aa)) is interaction with NEK7. Phosphoserine is present on residues S2 and S5. ANK repeat units lie at residues 34–64 (DVPLDLHTAASIGQHEVVKECVQRGELDLNK), 68–97 (GGWTALMYASYIGHDTIVHLLLEAGVSVNV), 101–130 (EGQTPLMLASSCGNESIAYFLLQQGAELEM), 134–163 (HGWTALFHCTSAGHQQMVKFLLESGANANV), 168–197 (YGYTPLMEAAASGHEIIVQYFLNHGVKVDT), and 201–220 (SGATACMLARQFGHMKIVAL). At N96 the chain carries 3-hydroxyasparagine. S201, S225, S243, S244, and S245 each carry phosphoserine. The tract at residues 314-426 (YRDVTSPINE…QTEKSPYSGP (113 aa)) is disordered. At T318 the chain carries Phosphothreonine. 4 positions are modified to phosphoserine: S319, S366, S369, and S373. Residues 378–395 (KSSVRKQTRSYLKNKSRH) are compositionally biased toward basic residues. The SAM domain occupies 424–487 (SGPQDLATLL…TSAIARWHSS (64 aa)). Residues 500–575 (ADRLETEMQE…AALVLDQLRA (76 aa)) adopt a coiled-coil conformation. Residue S540 is modified to Phosphoserine.

In terms of assembly, homooligomer. Interacts (via SAM domain) with ANKS6 (via SAM domain). Interacts with BICC1. Interacts with NPHP1. Interacts with NEK8. Interacts with HIF1AN. Interacts with NEK7; this interaction alters the subcellular distribution of NEK7 by preventing its nuclear translocation. Hydroxylated at Asn-96, most probably by HIF1AN. Post-translationally, phosphorylations at Ser-5, Ser-225, Thr-318, Ser-319, Ser-366 and Ser-369 occur in a NEK7-dependent manner. In terms of processing, polyubiquitinated. In terms of tissue distribution, kidney (at protein level).

Its subcellular location is the cell projection. The protein resides in the cilium. It localises to the cytoplasm. May be involved in vasopressin signaling in the kidney. The chain is Ankyrin repeat and SAM domain-containing protein 3 (Anks3) from Mus musculus (Mouse).